We begin with the raw amino-acid sequence, 557 residues long: Formate--tetrahydrofolate ligase (557 aa).

Thr67–Thr74 contacts ATP.

It belongs to the formate--tetrahydrofolate ligase family.

It carries out the reaction (6S)-5,6,7,8-tetrahydrofolate + formate + ATP = (6R)-10-formyltetrahydrofolate + ADP + phosphate. It participates in one-carbon metabolism; tetrahydrofolate interconversion. In Cereibacter sphaeroides (strain ATCC 17029 / ATH 2.4.9) (Rhodobacter sphaeroides), this protein is Formate--tetrahydrofolate ligase.